The primary structure comprises 543 residues: CTP synthase (543 aa).

The interval 1-265 (MTRYIFVTGG…DDYVVERFGL (265 aa)) is amidoligase domain. Ser-13 serves as a coordination point for CTP. Ser-13 contributes to the UTP binding site. ATP contacts are provided by residues 14-19 (SLGKGI) and Asp-71. 2 residues coordinate Mg(2+): Asp-71 and Glu-139. Residues 146–148 (DIE), 186–191 (KTKPTQ), and Lys-222 each bind CTP. UTP-binding positions include 186–191 (KTKPTQ) and Lys-222. Residues 290–541 (NIAMVGKYME…VNAALEYKAK (252 aa)) enclose the Glutamine amidotransferase type-1 domain. Position 351 (Gly-351) interacts with L-glutamine. The active-site Nucleophile; for glutamine hydrolysis is Cys-378. Residues 379–382 (LGMQ), Glu-402, and Arg-469 contribute to the L-glutamine site. Catalysis depends on residues His-514 and Glu-516.

It belongs to the CTP synthase family. As to quaternary structure, homotetramer.

The enzyme catalyses UTP + L-glutamine + ATP + H2O = CTP + L-glutamate + ADP + phosphate + 2 H(+). It carries out the reaction L-glutamine + H2O = L-glutamate + NH4(+). It catalyses the reaction UTP + NH4(+) + ATP = CTP + ADP + phosphate + 2 H(+). It functions in the pathway pyrimidine metabolism; CTP biosynthesis via de novo pathway; CTP from UDP: step 2/2. Its activity is regulated as follows. Allosterically activated by GTP, when glutamine is the substrate; GTP has no effect on the reaction when ammonia is the substrate. The allosteric effector GTP functions by stabilizing the protein conformation that binds the tetrahedral intermediate(s) formed during glutamine hydrolysis. Inhibited by the product CTP, via allosteric rather than competitive inhibition. In terms of biological role, catalyzes the ATP-dependent amination of UTP to CTP with either L-glutamine or ammonia as the source of nitrogen. Regulates intracellular CTP levels through interactions with the four ribonucleotide triphosphates. In Stutzerimonas stutzeri (strain A1501) (Pseudomonas stutzeri), this protein is CTP synthase.